We begin with the raw amino-acid sequence, 1678 residues long: Hispidin synthase (1678 aa).

Residues 33-453 (GEHRWSYREL…WLGRNTDFIQ (421 aa)) are adenylation (A) domain. Positions 586–661 (DELSNTVKHI…SLSNAVYAKL (76 aa)) constitute a Carrier 1 domain. Serine 620 bears the O-(pantetheine 4'-phosphoryl)serine mark. A Ketosynthase family 3 (KS3) domain is found at 683 to 1108 (GKEIVVVGQA…GTLGGIVLEA (426 aa)). Catalysis depends on for beta-ketoacyl synthase activity residues cysteine 852, histidine 988, and histidine 1029. The segment at 1201-1499 (YKRGALAFAF…VAWSLLLSNG (299 aa)) is malonyl-CoA:ACP transacylase (MAT) domain. A disordered region spans residues 1562-1582 (EETLSSGSSTPTLENTDLDSG). A compositionally biased stretch (polar residues) spans 1564–1576 (TLSSGSSTPTLEN). In terms of domain architecture, Carrier 2 spans 1597 to 1672 (DDLRDSIVSS…EMVSNLVEQA (76 aa)). Position 1632 is an O-(pantetheine 4'-phosphoryl)serine (serine 1632).

In the N-terminal section; belongs to the NRP synthetase family.

The catalysed reaction is (E)-caffeate + 2 malonyl-CoA + ATP + H(+) = hispidin + AMP + 2 CO2 + diphosphate + 2 CoA. Its pathway is secondary metabolite biosynthesis. PKS-NRPS hybrid synthetase; part of the gene cluster that mediates the fungal bioluminescence cycle. Performs the biosynthesis of hispidin from caffeic acid by two cycles of addition of malonyl units followed by lactonization. The fungal bioluminescence cycle begins with the hispidin synthetase that catalyzes the formation of hispidin which is further hydroxylated by the hispidin-3-hydroxylase, yielding the fungal luciferin 3-hydroxyhispidin. The luciferase then produces an endoperoxide as a high-energy intermediate with decomposition that yields oxyluciferin (also known as caffeoylpyruvate) and light emission. Oxyluciferin can be recycled to caffeic acid by caffeoylpyruvate hydrolase. This Neonothopanus nambi (Agaricus nambi) protein is Hispidin synthase.